We begin with the raw amino-acid sequence, 467 residues long: uncharacterized protein (467 aa).

The disordered stretch occupies residues 416-467; that stretch reads KQQRAQTAVVGTTKELVSKATHMKPPRTPPGEAEHRKRSQSLAICQWNKNSR. Polar residues predominate over residues 455–467; sequence QSLAICQWNKNSR.

This is an uncharacterized protein from Homo sapiens (Human).